Consider the following 227-residue polypeptide: Phosphoribosylformylglycinamidine synthase subunit PurQ (227 aa).

Positions 2–226 constitute a Glutamine amidotransferase type-1 domain; the sequence is KFAVIQFPGS…VKAWKEEQVN (225 aa). The active-site Nucleophile is the Cys-86. Catalysis depends on residues His-195 and Glu-197.

In terms of assembly, part of the FGAM synthase complex composed of 1 PurL, 1 PurQ and 2 PurS subunits.

It is found in the cytoplasm. It catalyses the reaction N(2)-formyl-N(1)-(5-phospho-beta-D-ribosyl)glycinamide + L-glutamine + ATP + H2O = 2-formamido-N(1)-(5-O-phospho-beta-D-ribosyl)acetamidine + L-glutamate + ADP + phosphate + H(+). The catalysed reaction is L-glutamine + H2O = L-glutamate + NH4(+). It participates in purine metabolism; IMP biosynthesis via de novo pathway; 5-amino-1-(5-phospho-D-ribosyl)imidazole from N(2)-formyl-N(1)-(5-phospho-D-ribosyl)glycinamide: step 1/2. In terms of biological role, part of the phosphoribosylformylglycinamidine synthase complex involved in the purines biosynthetic pathway. Catalyzes the ATP-dependent conversion of formylglycinamide ribonucleotide (FGAR) and glutamine to yield formylglycinamidine ribonucleotide (FGAM) and glutamate. The FGAM synthase complex is composed of three subunits. PurQ produces an ammonia molecule by converting glutamine to glutamate. PurL transfers the ammonia molecule to FGAR to form FGAM in an ATP-dependent manner. PurS interacts with PurQ and PurL and is thought to assist in the transfer of the ammonia molecule from PurQ to PurL. This chain is Phosphoribosylformylglycinamidine synthase subunit PurQ, found in Listeria monocytogenes serotype 4b (strain CLIP80459).